Consider the following 241-residue polypeptide: ATP synthase subunit a (241 aa).

A run of 7 helical transmembrane segments spans residues 27–47, 52–72, 87–107, 112–132, 142–162, 175–195, and 198–218; these read NCSL…CWAL, VVPG…ANTL, VMTT…PFGF, HLSV…VIGF, IFLP…IKLF, LAAN…FVLK, and LVLA…EIFV.

This sequence belongs to the ATPase A chain family. F-type ATPases have 2 components, CF(1) - the catalytic core - and CF(0) - the membrane proton channel. CF(1) has five subunits: alpha(3), beta(3), gamma(1), delta(1), epsilon(1). CF(0) has three main subunits: a(1), b(2) and c(9-12). The alpha and beta chains form an alternating ring which encloses part of the gamma chain. CF(1) is attached to CF(0) by a central stalk formed by the gamma and epsilon chains, while a peripheral stalk is formed by the delta and b chains.

The protein localises to the cell inner membrane. Its function is as follows. Key component of the proton channel; it plays a direct role in the translocation of protons across the membrane. The polypeptide is ATP synthase subunit a (Anaplasma marginale (strain St. Maries)).